The chain runs to 1522 residues: DNA topoisomerase 2-binding protein 1 (1522 aa).

2 BRCT domains span residues V101–D189 and F195–T284. Residue T298 is modified to Phosphothreonine. S301 carries the phosphoserine modification. BRCT domains follow at residues A354–H444, T548–L633, and T641–I738. Positions I756–L891 are interaction with CIP2A. A phosphothreonine mark is found at T779 and T848. The short motif at P852–K858 is the Nuclear localization signal element. The residue at position 860 (S860) is a Phosphoserine. T861 carries the post-translational modification Phosphothreonine. 3 positions are modified to phosphoserine: S864, S886, and S888. The BRCT 6 domain occupies E900–H991. The residue at position 1002 (S1002) is a Phosphoserine. A disordered region spans residues V1018–K1058. A compositionally biased stretch (acidic residues) spans D1024 to V1036. Residues M1039–K1058 are compositionally biased toward polar residues. Residues T1062 and T1064 each carry the phosphothreonine modification. Residues S1083 to S1114 show a composition bias toward polar residues. Positions S1083 to R1118 are disordered. BRCT domains lie at E1259–W1351 and I1389–L1486. The disordered stretch occupies residues T1501–H1522. Phosphoserine is present on S1504. A Nuclear localization signal motif is present at residues K1517–R1520.

It belongs to the TOPBP1 family. Interacts (via BRCT domains 1 and 2) with (phosphorylated) MDC1; promoting TOPBP1 recruitment to DNA damage sites during mitosis. Interacts (via BRCT domains 7 and 8) with (autophosphorylated) ATR; promoting activation of ATR. Interacts (via BRCT domains 7 and 8) with (phosphorylated) POLQ; specifically binds POLQ phosphorylated by PLK1, promoting POLQ recruitment to DNA damage sites. Interacts (via BRCT domains 1 and 2) with (phosphorylated) RAD9A. Interacts (via BRCT domain 2) with (phosphorylated) TP53BP1. Interacts (via BRCT domain 2) with (phosphorylated) HTATSF1. Interacts (via BRCT domains 7 and 8) with (phosphorylated) RAD51; promoting RAD51 recruitment to damaged chromatin. Interacts with CIP2A; forming the CIP2A-TOPBP1 complex. Interacts with POLE. Interacts with UBR5. Interacts with E2F1. Interacts with PML. Interacts with SMARCA2. Interacts with SMARCA4. Interacts with RHNO1. May interact with TOP2B. Interacts with TICRR. Interacts with HELB. Interacts (via residues 1233-1522) with RECQL4. Post-translationally, phosphorylated on serine and threonine residues in response to X-ray irradiation. Ubiquitinated and degraded by the proteasome. X-ray irradiation reduces ubiquitination. Deubiquitinated by USP13; leading to TOPBP1 stabilizion and activation of the ATR-TOPBP1 axis pathway. As to expression, highly expressed in heart, brain, placenta, lung and kidney.

The protein localises to the nucleus. It is found in the chromosome. Its subcellular location is the cytoplasm. It localises to the cytoskeleton. The protein resides in the microtubule organizing center. The protein localises to the centrosome. It is found in the spindle pole. Scaffold protein that acts as a key protein-protein adapter in DNA replication and DNA repair. Composed of multiple BRCT domains, which specifically recognize and bind phosphorylated proteins, bringing proteins together into functional combinations. Required for DNA replication initiation but not for the formation of pre-replicative complexes or the elongation stages. Necessary for the loading of replication factors onto chromatin, including GMNC, CDC45, DNA polymerases and components of the GINS complex. Plays a central role in DNA repair by bridging proteins and promoting recruitment of proteins to DNA damage sites. Involved in double-strand break (DSB) repair via homologous recombination in S-phase by promoting the exchange between the DNA replication factor A (RPA) complex and RAD51. Mechanistically, TOPBP1 is recruited to DNA damage sites in S-phase via interaction with phosphorylated HTATSF1, and promotes the loading of RAD51, thereby facilitating RAD51 nucleofilaments formation and RPA displacement, followed by homologous recombination. Involved in microhomology-mediated end-joining (MMEJ) DNA repair by promoting recruitment of polymerase theta (POLQ) to DNA damage sites during mitosis. MMEJ is an alternative non-homologous end-joining (NHEJ) machinery that takes place during mitosis to repair DSBs in DNA that originate in S-phase. Recognizes and binds POLQ phosphorylated by PLK1, enabling its recruitment to DSBs for subsequent repair. Involved in G1 DNA damage checkpoint by acting as a molecular adapter that couples TP53BP1 and the 9-1-1 complex. In response to DNA damage, triggers the recruitment of checkpoint signaling proteins on chromatin, which activate the CHEK1 signaling pathway and block S-phase progression. Acts as an activator of the kinase activity of ATR. Also required for chromosomal stability when DSBs occur during mitosis by forming filamentous assemblies that bridge MDC1 and tether broken chromosomes during mitosis. Together with CIP2A, plays an essential role in the response to genome instability generated by the presence of acentric chromosome fragments derived from shattered chromosomes within micronuclei. Micronuclei, which are frequently found in cancer cells, consist of chromatin surrounded by their own nuclear membrane: following breakdown of the micronuclear envelope, a process associated with chromothripsis, the CIP2A-TOPBP1 complex tethers chromosome fragments during mitosis to ensure clustered segregation of the fragments to a single daughter cell nucleus, facilitating re-ligation with limited chromosome scattering and loss. Recruits the SWI/SNF chromatin remodeling complex to E2F1-responsive promoters, thereby down-regulating E2F1 activity and inhibiting E2F1-dependent apoptosis during G1/S transition and after DNA damage. The sequence is that of DNA topoisomerase 2-binding protein 1 from Homo sapiens (Human).